Reading from the N-terminus, the 410-residue chain is 3-phosphoshikimate 1-carboxyvinyltransferase (410 aa).

3 residues coordinate 3-phosphoshikimate: lysine 20, serine 21, and arginine 25. Lysine 20 provides a ligand contact to phosphoenolpyruvate. 2 residues coordinate phosphoenolpyruvate: glycine 87 and arginine 115. 3-phosphoshikimate contacts are provided by serine 157, serine 158, glutamine 159, serine 183, aspartate 293, and lysine 320. Residue glutamine 159 coordinates phosphoenolpyruvate. The active-site Proton acceptor is the aspartate 293. 3 residues coordinate phosphoenolpyruvate: arginine 324, arginine 365, and lysine 391.

Belongs to the EPSP synthase family. Monomer.

It is found in the cytoplasm. It catalyses the reaction 3-phosphoshikimate + phosphoenolpyruvate = 5-O-(1-carboxyvinyl)-3-phosphoshikimate + phosphate. The protein operates within metabolic intermediate biosynthesis; chorismate biosynthesis. In terms of biological role, catalyzes the transfer of the enolpyruvyl moiety of phosphoenolpyruvate (PEP) to the 5-hydroxyl of shikimate-3-phosphate (S3P) to produce enolpyruvyl shikimate-3-phosphate and inorganic phosphate. This chain is 3-phosphoshikimate 1-carboxyvinyltransferase, found in Thermoplasma volcanium (strain ATCC 51530 / DSM 4299 / JCM 9571 / NBRC 15438 / GSS1).